A 458-amino-acid polypeptide reads, in one-letter code: Transmembrane protein 135 (458 aa).

Transmembrane regions (helical) follow at residues 68–88, 96–116, 149–169, 298–318, 331–351, and 380–400; these read ILQS…FFCI, FYLW…AILV, TLRN…MFFF, FQLG…SCFL, IIAG…TISM, and IIYS…VQTL.

This sequence belongs to the TMEM135 family.

It is found in the mitochondrion membrane. It localises to the peroxisome membrane. Functionally, involved in mitochondrial metabolism by regulating the balance between mitochondrial fusion and fission. May act as a regulator of mitochondrial fission that promotes DNM1L-dependent fission through activation of DNM1L. May be involved in peroxisome organization. The chain is Transmembrane protein 135 from Bos taurus (Bovine).